A 446-amino-acid polypeptide reads, in one-letter code: MAGFMKYKSVSTTIETVRLKLILTAVLFLFPFSQTSGASRPIIEIKDGQEIKVQAAQHFCYNNTIIPGWRETWTRIQVRVWSTTKLKVTVVNDEQDLKELEHFSIWKLVQYFVREQTNETTISVSLFNNKTCFRVDPSESRTLYTVQPSRHFDIYLFLVFLAGVLLFFYADVLSRSQVFHYSAGMSTGMIASLLILIFIVYRFLPKKSPFYMLVVGGWSFSLYIIQLVFRNLQVILTDHWHLAIGYVFVVGFISFAVCYRYGPLVEERSINILSWALQIFGLLLVYAGIQVQQVAFAIMIAAFCSKNLEYPFNTAFMLYHKLKPKKLEPRRLLTEEEFQRQSEVETQKALEELRKYCGSPDFNTWKTVSRLQSPKRFADFIEGSPHLLSNEVSVHMQEYGLGGSFFEDELFSTDEEDKEEEEDGWETEDDIKPEVTSPRMNNTRGK.

The N-terminal stretch at 1-37 is a signal peptide; sequence MAGFMKYKSVSTTIETVRLKLILTAVLFLFPFSQTSG. Residues Asn-62, Asn-118, and Asn-129 are each glycosylated (N-linked (GlcNAc...) asparagine). Helical transmembrane passes span 154 to 174, 181 to 201, 209 to 229, 239 to 259, and 269 to 289; these read IYLF…DVLS, YSAG…FIVY, PFYM…QLVF, HWHL…AVCY, and SINI…YAGI. The span at 410–431 shows a compositional bias: acidic residues; sequence LFSTDEEDKEEEEDGWETEDDI. The interval 410 to 446 is disordered; that stretch reads LFSTDEEDKEEEEDGWETEDDIKPEVTSPRMNNTRGK. A glycan (N-linked (GlcNAc...) asparagine) is linked at Asn-441.

It belongs to the NEMP family.

It is found in the nucleus inner membrane. Contributes to nuclear envelope stiffness in germ cells. Involved in male and female fertility. Essential for normal erythropoiesis. Required for efficient nuclear envelope opening and enucleation during the late stages of erythroblast maturation. The chain is Nuclear envelope integral membrane protein 1 from Danio rerio (Zebrafish).